The primary structure comprises 394 residues: Elongation factor Tu (394 aa).

Residues 10–204 enclose the tr-type G domain; the sequence is KPHVNIGTIG…AVDSYIPQPV (195 aa). The G1 stretch occupies residues 19–26; sequence GHVDHGKT. 19–26 is a GTP binding site; that stretch reads GHVDHGKT. Thr26 is a binding site for Mg(2+). The G2 stretch occupies residues 60–64; sequence GITIS. The G3 stretch occupies residues 81-84; it reads DCPG. GTP contacts are provided by residues 81-85 and 136-139; these read DCPGH and NKVD. The segment at 136-139 is G4; the sequence is NKVD. Positions 174 to 176 are G5; sequence SAL.

Belongs to the TRAFAC class translation factor GTPase superfamily. Classic translation factor GTPase family. EF-Tu/EF-1A subfamily. As to quaternary structure, monomer.

The protein resides in the cytoplasm. The catalysed reaction is GTP + H2O = GDP + phosphate + H(+). GTP hydrolase that promotes the GTP-dependent binding of aminoacyl-tRNA to the A-site of ribosomes during protein biosynthesis. The polypeptide is Elongation factor Tu (Rickettsia canadensis (strain McKiel)).